The sequence spans 386 residues: Arginine biosynthesis bifunctional protein ArgJ (386 aa).

Substrate is bound by residues threonine 148, lysine 170, threonine 181, glutamate 261, asparagine 381, and serine 386. Threonine 181 acts as the Nucleophile in catalysis.

The protein belongs to the ArgJ family. As to quaternary structure, heterotetramer of two alpha and two beta chains.

Its subcellular location is the cytoplasm. The enzyme catalyses N(2)-acetyl-L-ornithine + L-glutamate = N-acetyl-L-glutamate + L-ornithine. The catalysed reaction is L-glutamate + acetyl-CoA = N-acetyl-L-glutamate + CoA + H(+). Its pathway is amino-acid biosynthesis; L-arginine biosynthesis; L-ornithine and N-acetyl-L-glutamate from L-glutamate and N(2)-acetyl-L-ornithine (cyclic): step 1/1. It functions in the pathway amino-acid biosynthesis; L-arginine biosynthesis; N(2)-acetyl-L-ornithine from L-glutamate: step 1/4. In terms of biological role, catalyzes two activities which are involved in the cyclic version of arginine biosynthesis: the synthesis of N-acetylglutamate from glutamate and acetyl-CoA as the acetyl donor, and of ornithine by transacetylation between N(2)-acetylornithine and glutamate. This Corynebacterium diphtheriae (strain ATCC 700971 / NCTC 13129 / Biotype gravis) protein is Arginine biosynthesis bifunctional protein ArgJ.